Reading from the N-terminus, the 271-residue chain is Phosphatidylglycerol--prolipoprotein diacylglyceryl transferase (271 aa).

Helical transmembrane passes span 21–41 (ISVRWYGLMYLFGFLFAMWLA), 60–80 (LLFAGFLGVVLGGRIGYVLFY), 95–115 (VWTGGMSFHGGLLGVITAMLW), 124–144 (FFGVADFVAPLVPFGLGVGRL), 176–196 (SQLYEMALEGVVLFFILNWFI), 203–223 (GSVSGLFLAGYGTFRFLVEYV), and 230–250 (LGLFGGFISMGQILSSPMIIG). Position 143 (R143) interacts with a 1,2-diacyl-sn-glycero-3-phospho-(1'-sn-glycerol).

This sequence belongs to the Lgt family.

It localises to the cell inner membrane. The enzyme catalyses L-cysteinyl-[prolipoprotein] + a 1,2-diacyl-sn-glycero-3-phospho-(1'-sn-glycerol) = an S-1,2-diacyl-sn-glyceryl-L-cysteinyl-[prolipoprotein] + sn-glycerol 1-phosphate + H(+). It participates in protein modification; lipoprotein biosynthesis (diacylglyceryl transfer). Functionally, catalyzes the transfer of the diacylglyceryl group from phosphatidylglycerol to the sulfhydryl group of the N-terminal cysteine of a prolipoprotein, the first step in the formation of mature lipoproteins. This chain is Phosphatidylglycerol--prolipoprotein diacylglyceryl transferase, found in Vibrio vulnificus (strain CMCP6).